Consider the following 118-residue polypeptide: Large ribosomal subunit protein uL22c (118 aa).

This sequence belongs to the universal ribosomal protein uL22 family. Part of the 50S ribosomal subunit.

It is found in the plastid. It localises to the chloroplast. In terms of biological role, this protein binds specifically to 23S rRNA. Its function is as follows. The globular domain of the protein is located near the polypeptide exit tunnel on the outside of the subunit, while an extended beta-hairpin is found that lines the wall of the exit tunnel in the center of the 70S ribosome. In Physcomitrium patens (Spreading-leaved earth moss), this protein is Large ribosomal subunit protein uL22c (rpl22).